A 252-amino-acid chain; its full sequence is Probable transcriptional regulatory protein Tmel_0985 (252 aa).

This sequence belongs to the TACO1 family.

Its subcellular location is the cytoplasm. The polypeptide is Probable transcriptional regulatory protein Tmel_0985 (Thermosipho melanesiensis (strain DSM 12029 / CIP 104789 / BI429)).